Here is a 335-residue protein sequence, read N- to C-terminus: Anthranilate phosphoribosyltransferase (335 aa).

Residues Gly79, 82 to 83 (GD), Thr87, 89 to 92 (NIST), 107 to 115 (KHGNRSASS), and Ala119 contribute to the 5-phospho-alpha-D-ribose 1-diphosphate site. Gly79 serves as a coordination point for anthranilate. Ser91 contributes to the Mg(2+) binding site. Position 110 (Asn110) interacts with anthranilate. Residue Arg165 participates in anthranilate binding. 2 residues coordinate Mg(2+): Asp224 and Glu225.

This sequence belongs to the anthranilate phosphoribosyltransferase family. In terms of assembly, homodimer. It depends on Mg(2+) as a cofactor.

It carries out the reaction N-(5-phospho-beta-D-ribosyl)anthranilate + diphosphate = 5-phospho-alpha-D-ribose 1-diphosphate + anthranilate. Its pathway is amino-acid biosynthesis; L-tryptophan biosynthesis; L-tryptophan from chorismate: step 2/5. Its function is as follows. Catalyzes the transfer of the phosphoribosyl group of 5-phosphorylribose-1-pyrophosphate (PRPP) to anthranilate to yield N-(5'-phosphoribosyl)-anthranilate (PRA). The protein is Anthranilate phosphoribosyltransferase of Methanobrevibacter smithii (strain ATCC 35061 / DSM 861 / OCM 144 / PS).